A 493-amino-acid chain; its full sequence is L-arabinose isomerase 1 (493 aa).

4 residues coordinate Mn(2+): Glu301, Glu326, His343, and His442.

The protein belongs to the arabinose isomerase family. It depends on Mn(2+) as a cofactor.

It carries out the reaction beta-L-arabinopyranose = L-ribulose. The protein operates within carbohydrate degradation; L-arabinose degradation via L-ribulose; D-xylulose 5-phosphate from L-arabinose (bacterial route): step 1/3. In terms of biological role, catalyzes the conversion of L-arabinose to L-ribulose. The sequence is that of L-arabinose isomerase 1 from Bacillus licheniformis (strain ATCC 14580 / DSM 13 / JCM 2505 / CCUG 7422 / NBRC 12200 / NCIMB 9375 / NCTC 10341 / NRRL NRS-1264 / Gibson 46).